The following is a 200-amino-acid chain: Probable GTP-binding protein EngB (200 aa).

Residues 22–195 (GKDEIAFVGR…INNICSGINY (174 aa)) form the EngB-type G domain. GTP is bound by residues 30–37 (GRSNVGKS), 57–61 (GKTRL), 75–78 (DLPG), 142–145 (TKSD), and 174–176 (FSS). Residues Ser-37 and Thr-59 each contribute to the Mg(2+) site.

This sequence belongs to the TRAFAC class TrmE-Era-EngA-EngB-Septin-like GTPase superfamily. EngB GTPase family. Mg(2+) is required as a cofactor.

Functionally, necessary for normal cell division and for the maintenance of normal septation. This is Probable GTP-binding protein EngB from Clostridium acetobutylicum (strain ATCC 824 / DSM 792 / JCM 1419 / IAM 19013 / LMG 5710 / NBRC 13948 / NRRL B-527 / VKM B-1787 / 2291 / W).